Here is a 64-residue protein sequence, read N- to C-terminus: Gallinacin-2 (64 aa).

The signal sequence occupies residues 1-22 (MRILYLLFSLLFLALQVSPGLS). The propeptide occupies 23–28 (SPRRDM). 3 disulfide bridges follow: cysteine 31-cysteine 57, cysteine 36-cysteine 51, and cysteine 41-cysteine 58.

As to expression, expressed in circulating heterophil granulocytes and bone marrow (at protein level). Strong expression in the bone marrow, lung and testis. Moderate expression in the bursa and intestine. Low expression in the cloaca, gall bladder, brain, pancreas, trachea, air sacs and spleen. Expressed in the vagina, ovarian stroma and the theca layer of the ovarian follicle, but not in the granulosa layer of the ovarian follicle.

It localises to the secreted. The protein localises to the cytoplasmic granule. In terms of biological role, potent antibacterial activity against the Gram-negative bacterium E.coli ML-35, and against the Gram-positive bacterium L.monocytogenes EGD. Lacks antifungal activity against C.albicans. In Gallus gallus (Chicken), this protein is Gallinacin-2 (GAL2).